The primary structure comprises 160 residues: Cytochrome b6-f complex subunit 4 (160 aa).

3 helical membrane passes run 36-56 (LLYI…GLAV), 95-115 (LLGV…PFLE), and 131-151 (TVFL…TLPI).

Belongs to the cytochrome b family. PetD subfamily. As to quaternary structure, the 4 large subunits of the cytochrome b6-f complex are cytochrome b6, subunit IV (17 kDa polypeptide, petD), cytochrome f and the Rieske protein, while the 4 small subunits are petG, petL, petM and petN. The complex functions as a dimer.

It is found in the plastid. The protein resides in the chloroplast thylakoid membrane. Functionally, component of the cytochrome b6-f complex, which mediates electron transfer between photosystem II (PSII) and photosystem I (PSI), cyclic electron flow around PSI, and state transitions. This is Cytochrome b6-f complex subunit 4 from Amborella trichopoda.